The primary structure comprises 1405 residues: Sterol 3-beta-glucosyltransferase (1405 aa).

Composition is skewed to basic and acidic residues over residues 1 to 16 (MRPF…DRKL) and 95 to 105 (TGQRPRKESSV). Disordered regions lie at residues 1–27 (MRPF…SASR), 83–186 (ARFD…SATP), and 203–230 (DLKA…ASVS). The span at 106–115 (RKGTSVSVNT) shows a compositional bias: polar residues. A compositionally biased stretch (low complexity) spans 116-126 (SSLDPSQRSSS). Over residues 206–218 (ASSTERSQSSLNE) the composition is skewed to polar residues. Positions 246–285 (EKVLVEYACSLLQSMLLQGYMYVTEGHICFYAYLPKKSTV) constitute a GRAM 1 domain. Positions 285–384 (VAIKSGYLHK…WVKALQKVIF (100 aa)) constitute a PH domain. Disordered stretches follow at residues 461–526 (SQHL…DSSD) and 566–642 (TIYG…SGAP). The span at 483 to 493 (RWSLTSGTSRA) shows a compositional bias: polar residues. The segment covering 570–589 (LDRRPSGRERRGRRNSDETA) has biased composition (basic and acidic residues). A compositionally biased stretch (polar residues) spans 590–603 (RSPSTRVNVGTGQQ). Over residues 606–624 (ELDRRTDGNTSGREARDTT) the composition is skewed to basic and acidic residues. Over residues 626 to 642 (ESDQYTQDPTKSFSGAP) the composition is skewed to polar residues. Positions 724-790 (DRFRAHFALP…RDIENVEKEK (67 aa)) constitute a GRAM 2 domain. UDP-alpha-D-glucose contacts are provided by S911, R912, D914, A1214, H1216, H1229, G1233, T1234, D1253, and Q1254. The segment at 1330-1367 (SIASSTPFSPTPSAKTAAEQDADDDVEDSEEWTFVGDD) is disordered. The span at 1332-1348 (ASSTPFSPTPSAKTAAE) shows a compositional bias: low complexity. Acidic residues predominate over residues 1349–1367 (QDADDDVEDSEEWTFVGDD).

It belongs to the glycosyltransferase 28 family.

It is found in the cytoplasm. Its subcellular location is the preautophagosomal structure membrane. The enzyme catalyses a sterol + UDP-alpha-D-glucose = a sterol 3-beta-D-glucoside + UDP + H(+). It carries out the reaction ergosterol + UDP-alpha-D-glucose = ergosteryl 3-beta-D-glucoside + UDP + H(+). Functionally, sterol glycosyltransferase responsible for the glycosylation of ergosterol to form ergosterol-glucoside. The protein is Sterol 3-beta-glucosyltransferase of Aspergillus fumigatus (strain ATCC MYA-4609 / CBS 101355 / FGSC A1100 / Af293) (Neosartorya fumigata).